Consider the following 193-residue polypeptide: ATP-dependent Clp protease proteolytic subunit 1 (193 aa).

The active-site Nucleophile is S98. The active site involves H123.

It belongs to the peptidase S14 family. Fourteen ClpP subunits assemble into 2 heptameric rings which stack back to back to give a disk-like structure with a central cavity, resembling the structure of eukaryotic proteasomes.

The protein localises to the cytoplasm. It catalyses the reaction Hydrolysis of proteins to small peptides in the presence of ATP and magnesium. alpha-casein is the usual test substrate. In the absence of ATP, only oligopeptides shorter than five residues are hydrolyzed (such as succinyl-Leu-Tyr-|-NHMec, and Leu-Tyr-Leu-|-Tyr-Trp, in which cleavage of the -Tyr-|-Leu- and -Tyr-|-Trp bonds also occurs).. Cleaves peptides in various proteins in a process that requires ATP hydrolysis. Has a chymotrypsin-like activity. Plays a major role in the degradation of misfolded proteins. This Bacillus cereus (strain ZK / E33L) protein is ATP-dependent Clp protease proteolytic subunit 1.